The primary structure comprises 112 residues: UPF0342 protein SUB0718 (112 aa).

This sequence belongs to the UPF0342 family.

The protein is UPF0342 protein SUB0718 of Streptococcus uberis (strain ATCC BAA-854 / 0140J).